The following is a 430-amino-acid chain: MAEAVLIDLFGLKLNSQKNCHQTLLKTLNAVQYHHAAKAKFLCIMCCSNISYERDGEQDNCEIETSNGLSALLEEFEIVSCPSMAATLYTIKQKIDEKNLSSIKVIVPRHRKTLMKAFIDQLFTDVYNFEFEDLQVTFRGGLFKQSIEINVITAQELRGIQNEIETFLRSLPALRGKLTIITSSLIPDIFIHGFTTRTGGISYIPTLSSFNLFSSSKRRDPKVVVQENLRRLANAAGFNVEKFYRIKTHHSNDIWIMGRKEPDSYDGITTNQRGVTIAALGADCIPIVFADPVKKACGVAHAGWKGTLLGVAMATVNAMIAEYGCSLEDIVVVLGPSVGPCCFTLPRESAEAFHNLHPACVQLFDSPNPCIDIRKATRILLEQGGILPQNIQDQNQDLNLCTSCHPDKFFSHVRDGLNFGTQIGFISIKE.

N6-acetyllysine is present on Lys-247. Zn(2+) is bound by residues His-250, Cys-284, and His-301.

This sequence belongs to the purine nucleoside phosphorylase YfiH/LACC1 family. In terms of assembly, interacts with FASN. Interacts with SDHA. Interacts with ATF6, EIF2AK3 and ERN1. In terms of processing, phosphorylated on tyrosine residues. In terms of tissue distribution, ubiquitously expressed, with higher expression levels in immune-related tissues such as lymph nodes and spleen. Expressed in both intestinal and peripheral myeloid-derived cells.

Its subcellular location is the cytoplasm. The protein localises to the nucleus. It is found in the endoplasmic reticulum. The protein resides in the peroxisome. It catalyses the reaction adenosine + phosphate = alpha-D-ribose 1-phosphate + adenine. The catalysed reaction is inosine + phosphate = alpha-D-ribose 1-phosphate + hypoxanthine. The enzyme catalyses guanosine + phosphate = alpha-D-ribose 1-phosphate + guanine. It carries out the reaction S-methyl-5'-thioadenosine + phosphate = 5-(methylsulfanyl)-alpha-D-ribose 1-phosphate + adenine. It catalyses the reaction adenosine + H2O + H(+) = inosine + NH4(+). In terms of biological role, purine nucleoside enzyme that catalyzes the phosphorolysis of adenosine, guanosine and inosine nucleosides, yielding D-ribose 1-phosphate and the respective free bases, adenine, guanine and hypoxanthine. Also catalyzes the phosphorolysis of S-methyl-5'-thioadenosine into adenine and S-methyl-5-thio-alpha-D-ribose 1-phosphate. Also has adenosine deaminase activity. Acts as a regulator of innate immunity in macrophages by modulating the purine nucleotide metabolism, thereby regulating the metabolic function and bioenergetic state of macrophages. Enables a purine nucleotide cycle between adenosine and inosine monophosphate and adenylosuccinate that prevents cytoplasmic acidification and balances the cytoplasmic-mitochondrial redox interface. The purine nucleotide cycle consumes aspartate and releases fumarate in a manner involving fatty acid oxidation and ATP-citrate lyase activity. Participates in pattern recognition receptor (PRR)-induced cytokines in macrophages: associates with the NOD2-signaling complex and promotes optimal NOD2-induced signaling, cytokine secretion and bacterial clearance. Localizes to the endoplasmic reticulum upon PRR stimulation of macrophages and associates with endoplasmic reticulum-stress sensors, promoting the endoplasmic reticulum unfolded protein response (UPR). Does not show laccase activity. This Homo sapiens (Human) protein is Purine nucleoside phosphorylase LACC1.